Reading from the N-terminus, the 531-residue chain is Putative heme-binding protein HQ_1094A (531 aa).

Histidine 177 lines the heme pocket. The disordered stretch occupies residues 269-340 (AHGEAHGHAH…STNTNTQDSE (72 aa)). Residues 271–281 (GEAHGHAHGDS) show a composition bias toward basic and acidic residues. Residues 284–306 (GSGGGGGSSHGQSPGGASAGGSA) are compositionally biased toward gly residues. The segment covering 308–317 (GTEDADHSDS) has biased composition (basic and acidic residues). The segment covering 318-338 (RSTTSADTTQSDTSTNTNTQD) has biased composition (low complexity). An ABM domain is found at 441 to 529 (GTMGMFYTVK…VLSERPRHVF (89 aa)).

This sequence in the N-terminal section; belongs to the ChdC family.

The chain is Putative heme-binding protein HQ_1094A from Haloquadratum walsbyi (strain DSM 16790 / HBSQ001).